Consider the following 245-residue polypeptide: Eukaryotic translation initiation factor 6 (245 aa).

The residue at position 113 (tyrosine 113) is a Phosphotyrosine. A Phosphothreonine modification is found at threonine 165. Phosphoserine is present on serine 166. Serine 174 and serine 175 each carry phosphoserine; by CK1. Serine 235 carries the phosphoserine; by PKC modification. Residues serine 239 and serine 243 each carry the phosphoserine modification.

Belongs to the eIF-6 family. As to quaternary structure, monomer. Associates with the 60S ribosomal subunit. Interacts with RACK1. Interacts with DICER1, AGO2, TARBP2, MOV10 and RPL7A; they form a large RNA-induced silencing complex (RISC). In terms of processing, phosphorylation at Ser-174 and Ser-175 by CSNK1D/CK1 promotes nuclear export. Ufmylated by UFL1. As to expression, expressed at very high levels in colon carcinoma with lower levels in normal colon and ileum and lowest levels in kidney and muscle (at protein level).

Its subcellular location is the cytoplasm. It is found in the nucleus. The protein resides in the nucleolus. Functionally, binds to the 60S ribosomal subunit and prevents its association with the 40S ribosomal subunit to form the 80S initiation complex in the cytoplasm. Behaves as a stimulatory translation initiation factor downstream insulin/growth factors. Is also involved in ribosome biogenesis. Associates with pre-60S subunits in the nucleus and is involved in its nuclear export. Cytoplasmic release of TIF6 from 60S subunits and nuclear relocalization is promoted by a RACK1 (RACK1)-dependent protein kinase C activity. In tissues responsive to insulin, controls fatty acid synthesis and glycolysis by exerting translational control of adipogenic transcription factors such as CEBPB, CEBPD and ATF4 that have G/C rich or uORF in their 5'UTR. Required for ROS-dependent megakaryocyte maturation and platelets formation, controls the expression of mitochondrial respiratory chain genes involved in reactive oxygen species (ROS) synthesis. Involved in miRNA-mediated gene silencing by the RNA-induced silencing complex (RISC). Required for both miRNA-mediated translational repression and miRNA-mediated cleavage of complementary mRNAs by RISC. Modulates cell cycle progression and global translation of pre-B cells, its activation seems to be rate-limiting in tumorigenesis and tumor growth. The sequence is that of Eukaryotic translation initiation factor 6 from Homo sapiens (Human).